The sequence spans 305 residues: ATP synthase gamma chain (305 aa).

This sequence belongs to the ATPase gamma chain family. As to quaternary structure, F-type ATPases have 2 components, CF(1) - the catalytic core - and CF(0) - the membrane proton channel. CF(1) has five subunits: alpha(3), beta(3), gamma(1), delta(1), epsilon(1). CF(0) has three main subunits: a, b and c.

Its subcellular location is the cell membrane. Produces ATP from ADP in the presence of a proton gradient across the membrane. The gamma chain is believed to be important in regulating ATPase activity and the flow of protons through the CF(0) complex. The polypeptide is ATP synthase gamma chain (Streptomyces avermitilis (strain ATCC 31267 / DSM 46492 / JCM 5070 / NBRC 14893 / NCIMB 12804 / NRRL 8165 / MA-4680)).